We begin with the raw amino-acid sequence, 158 residues long: Transcription elongation factor GreA (158 aa).

Positions Thr-3–Ala-75 form a coiled coil.

It belongs to the GreA/GreB family.

Its function is as follows. Necessary for efficient RNA polymerase transcription elongation past template-encoded arresting sites. The arresting sites in DNA have the property of trapping a certain fraction of elongating RNA polymerases that pass through, resulting in locked ternary complexes. Cleavage of the nascent transcript by cleavage factors such as GreA or GreB allows the resumption of elongation from the new 3'terminus. GreA releases sequences of 2 to 3 nucleotides. The sequence is that of Transcription elongation factor GreA from Bacillus cytotoxicus (strain DSM 22905 / CIP 110041 / 391-98 / NVH 391-98).